The following is a 311-amino-acid chain: Ribosomal RNA small subunit methyltransferase H (311 aa).

S-adenosyl-L-methionine contacts are provided by residues 33–35 (AGH), D53, F80, D101, and Q108.

It belongs to the methyltransferase superfamily. RsmH family.

It is found in the cytoplasm. It catalyses the reaction cytidine(1402) in 16S rRNA + S-adenosyl-L-methionine = N(4)-methylcytidine(1402) in 16S rRNA + S-adenosyl-L-homocysteine + H(+). In terms of biological role, specifically methylates the N4 position of cytidine in position 1402 (C1402) of 16S rRNA. The sequence is that of Ribosomal RNA small subunit methyltransferase H from Clostridioides difficile (strain 630) (Peptoclostridium difficile).